The chain runs to 381 residues: MHLPAILLCALWSAVVAETSDDYELMYVNLDNEIDNGLHPTEDPTPCDCRQEHSEWDKLFIMLENSQMREGMLLQATDDVLRGELQRLRAELGRLAGGMARPCAAGGPADARLVRALEPLLQESRDASLRLARLEDAEARRPEATVPGLGAVLEELRRTRADLSAVQSWVARHWLPAGCETAIFFPMRSKKIFGSVHPVRPMKLESFSTCIWVKATDVLNKTILFSYGTKWNPYEIQLYLSSQSLVLVVGGKENKLAADTVVSLGRWSHLCGTWSSEQGSMSLWANGELVATTVEMAKSHSVPEGGLLQIGQEKNGCCVGGGFDESLAFSGRITGFNIWDRVLSEEEIRASGGVESCHIRGNVVGWGVTEIQAHGGAQYVS.

The signal sequence occupies residues 1–17 (MHLPAILLCALWSAVVA). Cystine bridges form between Cys179-Cys357 and Cys210-Cys271. A Pentraxin (PTX) domain is found at 179–381 (CETAIFFPMR…QAHGGAQYVS (203 aa)). Asn220 is a glycosylation site (N-linked (GlcNAc...) asparagine).

As to quaternary structure, homooctamer; disulfide-linked. Binds to C1q.

The protein localises to the secreted. Its function is as follows. Plays a role in the regulation of innate resistance to pathogens, inflammatory reactions, possibly clearance of self-components and female fertility. The sequence is that of Pentraxin-related protein PTX3 (Ptx3) from Mus musculus (Mouse).